The sequence spans 150 residues: AN1-type zinc finger protein TMC1 (150 aa).

Residues 1–82 form a disordered region; it reads MSDINEIEIP…TKKTTKKKKK (82 aa). S2 bears the N-acetylserine mark. Basic and acidic residues predominate over residues 23-33; that stretch reads DPMHEIEDKST. A phosphoserine mark is found at S43 and S54. The segment covering 53-70 has biased composition (low complexity); that stretch reads NSRSSSNSSVTSTGQSSR. Basic residues predominate over residues 71–82; that stretch reads RVTKKTTKKKKK. The segment at 79–128 adopts an AN1-type zinc-finger fold; it reads KKKKNACYFDTCSSAASKFIGDCNFCKGHFCSKHRLMENHACNGLTSCKE. C85, C90, C101, C104, C109, H112, H118, and C120 together coordinate Zn(2+).

It localises to the nucleus. Functionally, may have a role in protecting cells from metalloid-induced proteotoxicity. The polypeptide is AN1-type zinc finger protein TMC1 (Saccharomyces cerevisiae (strain ATCC 204508 / S288c) (Baker's yeast)).